Here is a 345-residue protein sequence, read N- to C-terminus: Type II methyltransferase M.AplI (345 aa).

The SAM-dependent MTase C5-type domain occupies leucine 25 to lysine 325. Cysteine 93 is a catalytic residue.

Belongs to the class I-like SAM-binding methyltransferase superfamily. C5-methyltransferase family.

The catalysed reaction is a 2'-deoxycytidine in DNA + S-adenosyl-L-methionine = a 5-methyl-2'-deoxycytidine in DNA + S-adenosyl-L-homocysteine + H(+). Its function is as follows. A methylase, recognizes the double-stranded sequence 5'-CTGCAG-3', methylates C-4 on both strands, and protects the DNA from cleavage by the AplI endonuclease. The sequence is that of Type II methyltransferase M.AplI (aplIM) from Arthrospira platensis (strain NIES-39 / UTEX 3086 / IAM M-135) (Spirulina platensis).